A 425-amino-acid chain; its full sequence is Adenylosuccinate synthetase (425 aa).

GTP contacts are provided by residues glycine 12 to lysine 18 and glycine 40 to threonine 42. Residue aspartate 13 is the Proton acceptor of the active site. Positions 13 and 40 each coordinate Mg(2+). Residues aspartate 13 to lysine 16, asparagine 38 to histidine 41, threonine 130, arginine 144, glutamine 224, threonine 239, and arginine 301 each bind IMP. Histidine 41 serves as the catalytic Proton donor. Residue threonine 297–arginine 303 coordinates substrate. GTP-binding positions include arginine 303, lysine 329 to aspartate 331, and serine 411 to serine 413.

This sequence belongs to the adenylosuccinate synthetase family. As to quaternary structure, homodimer. The cofactor is Mg(2+).

Its subcellular location is the cytoplasm. The enzyme catalyses IMP + L-aspartate + GTP = N(6)-(1,2-dicarboxyethyl)-AMP + GDP + phosphate + 2 H(+). It functions in the pathway purine metabolism; AMP biosynthesis via de novo pathway; AMP from IMP: step 1/2. In terms of biological role, plays an important role in the de novo pathway of purine nucleotide biosynthesis. Catalyzes the first committed step in the biosynthesis of AMP from IMP. The polypeptide is Adenylosuccinate synthetase (Wolbachia sp. subsp. Drosophila simulans (strain wRi)).